A 169-amino-acid chain; its full sequence is Tumor suppressor ARF (169 aa).

The tract at residues 1–63 (MGRRFLVTVR…RRGPHRNPGP (63 aa)) is interaction with CDK5RAP3 and MDM2. The tract at residues 54–73 (RRGPHRNPGPGDDDGQRSRS) is disordered.

In terms of assembly, does not interact with cyclins, CDK1, CDK2, CDK4, CDK5 or CDK6. Interacts with COMMD1. Binds to BCL6, E2F1, HUWE1, MDM2, MYC, NPM1/B23, TOP1/TOPOI and UBE2I/UBC9. Interacts with TBRG1. Interacts with CDKN2AIP and E4F1. Interacts with CDK5RAP3 and MDM2; form a ternary complex involved in regulation of p53/TP53. Interacts with NOP53; the interaction is direct and promotes ARF nucleoplasmic relocalization and ubiquitin-mediated proteasomal degradation. Interacts with TTF1 (via the N-terminal region (NRD) and a C-terminal region); the interaction is direct and inhibits the nucleolar localization of TTF1. As to quaternary structure, interacts with C1QBP. Ubiquitinated in normal cells by TRIP12 via the ubiquitin fusion degradation (UFD) pathway, a process that mediates ubiquitination at the N-terminus, regardless of the absence of lysine residues. Ubiquitination leads to its proteasomal degradation. In cancer cells, however, TRIP12 is located in a different cell compartment, preventing ubiquitination and degradation.

The protein localises to the nucleus. It localises to the nucleolus. Its subcellular location is the nucleoplasm. The protein resides in the mitochondrion. Functionally, capable of inducing cell cycle arrest in G1 and G2 phases. Acts as a tumor suppressor. Binds to MDM2 and blocks its nucleocytoplasmic shuttling by sequestering it in the nucleolus. This inhibits the oncogenic action of MDM2 by blocking MDM2-induced degradation of p53 and enhancing p53-dependent transactivation and apoptosis. Also induces G2 arrest and apoptosis in a p53-independent manner by preventing the activation of cyclin B1/CDC2 complexes. Binds to BCL6 and down-regulates BCL6-induced transcriptional repression. Binds to E2F1 and MYC and blocks their transcriptional activator activity but has no effect on MYC transcriptional repression. Binds to TOP1/TOPOI and stimulates its activity. This complex binds to rRNA gene promoters and may play a role in rRNA transcription and/or maturation. Interacts with NPM1/B23 and promotes its polyubiquitination and degradation, thus inhibiting rRNA processing. Plays a role in inhibiting ribosome biogenesis, perhaps by binding to the nucleolar localization sequence of transcription termination factor TTF1, and thereby preventing nucleolar localization of TTF1. Interacts with COMMD1 and promotes its 'Lys63'-linked polyubiquitination. Interacts with UBE2I/UBC9 and enhances sumoylation of a number of its binding partners including MDM2 and E2F1. Binds to HUWE1 and represses its ubiquitin ligase activity. May play a role in controlling cell proliferation and apoptosis during mammary gland development. In terms of biological role, may be involved in regulation of autophagy and caspase-independent cell death; the short-lived mitochondrial isoform is stabilized by C1QBP. In Mus musculus (Mouse), this protein is Tumor suppressor ARF.